The sequence spans 843 residues: Glycogen phosphorylase, brain form (843 aa).

Ala-2 carries the post-translational modification N-acetylalanine. A Phosphoserine; by PHK; in form phosphorylase A modification is found at Ser-15. Residues Asp-43, Tyr-197, and Arg-310 each contribute to the AMP site. The residue at position 197 (Tyr-197) is a Phosphotyrosine. At Tyr-473 the chain carries Phosphotyrosine. Residue Ser-524 is modified to Phosphoserine. Lys-569 serves as a coordination point for pyridoxal 5'-phosphate. The tract at residues 677 to 678 (TG) is pyridoxal 5'-phosphate. Lys-681 carries the N6-(pyridoxal phosphate)lysine modification.

Belongs to the glycogen phosphorylase family. Homodimer. Dimers associate into a tetramer to form the enzymatically active phosphorylase A. Pyridoxal 5'-phosphate serves as cofactor. In terms of processing, phosphorylation of Ser-15 converts phosphorylase B (unphosphorylated) to phosphorylase A.

The enzyme catalyses [(1-&gt;4)-alpha-D-glucosyl](n) + phosphate = [(1-&gt;4)-alpha-D-glucosyl](n-1) + alpha-D-glucose 1-phosphate. With respect to regulation, activity of phosphorylase is controlled both by allosteric means (through the non-covalent binding of metabolites) and by covalent modification. Thus AMP allosterically activates, whereas ATP, ADP, and glucose-6-phosphate allosterically inhibit, phosphorylase B. Functionally, glycogen phosphorylase that regulates glycogen mobilization. Phosphorylase is an important allosteric enzyme in carbohydrate metabolism. Enzymes from different sources differ in their regulatory mechanisms and in their natural substrates. However, all known phosphorylases share catalytic and structural properties. The sequence is that of Glycogen phosphorylase, brain form (Pygb) from Mus musculus (Mouse).